The sequence spans 247 residues: L-cystine import ATP-binding protein TcyC (247 aa).

One can recognise an ABC transporter domain in the interval 2 to 240; sequence LTVKGLNKSF…PKEERTQRFL (239 aa). Residue 34-41 coordinates ATP; that stretch reads GPSGSGKT.

This sequence belongs to the ABC transporter superfamily. L-cystine importer (TC 3.A.1.3.14) family. In terms of assembly, the complex is composed of two ATP-binding proteins (TcyC), two transmembrane proteins (TcyB) and a solute-binding protein (TcyA).

The protein localises to the cell membrane. In terms of biological role, part of the ABC transporter complex TcyABC involved in L-cystine import. Responsible for energy coupling to the transport system. This chain is L-cystine import ATP-binding protein TcyC (tcyC), found in Bacillus subtilis (strain 168).